The following is a 264-amino-acid chain: Adenosylcobinamide-GDP ribazoletransferase (264 aa).

6 helical membrane passes run 39–59, 63–83, 121–141, 148–168, 201–221, and 241–261; these read IAYA…AILI, ALGL…VLLT, ACAL…LLAL, LALI…LEFL, LLIV…LSVL, and VAGA…LIYA.

This sequence belongs to the CobS family. The cofactor is Mg(2+).

Its subcellular location is the cell inner membrane. It carries out the reaction alpha-ribazole + adenosylcob(III)inamide-GDP = adenosylcob(III)alamin + GMP + H(+). It catalyses the reaction alpha-ribazole 5'-phosphate + adenosylcob(III)inamide-GDP = adenosylcob(III)alamin 5'-phosphate + GMP + H(+). The protein operates within cofactor biosynthesis; adenosylcobalamin biosynthesis; adenosylcobalamin from cob(II)yrinate a,c-diamide: step 7/7. In terms of biological role, joins adenosylcobinamide-GDP and alpha-ribazole to generate adenosylcobalamin (Ado-cobalamin). Also synthesizes adenosylcobalamin 5'-phosphate from adenosylcobinamide-GDP and alpha-ribazole 5'-phosphate. In Azorhizobium caulinodans (strain ATCC 43989 / DSM 5975 / JCM 20966 / LMG 6465 / NBRC 14845 / NCIMB 13405 / ORS 571), this protein is Adenosylcobinamide-GDP ribazoletransferase.